Here is a 596-residue protein sequence, read N- to C-terminus: Elongation factor 4 (596 aa).

A tr-type G domain is found at 2-184; it reads KHIRNFSIIA…EIIAKIPPPV (183 aa). Residues 14–19 and 131–134 each bind GTP; these read DHGKST and NKID.

The protein belongs to the TRAFAC class translation factor GTPase superfamily. Classic translation factor GTPase family. LepA subfamily.

The protein localises to the cell inner membrane. It carries out the reaction GTP + H2O = GDP + phosphate + H(+). Required for accurate and efficient protein synthesis under certain stress conditions. May act as a fidelity factor of the translation reaction, by catalyzing a one-codon backward translocation of tRNAs on improperly translocated ribosomes. Back-translocation proceeds from a post-translocation (POST) complex to a pre-translocation (PRE) complex, thus giving elongation factor G a second chance to translocate the tRNAs correctly. Binds to ribosomes in a GTP-dependent manner. This is Elongation factor 4 from Shewanella frigidimarina (strain NCIMB 400).